A 143-amino-acid chain; its full sequence is Transcriptional regulator MraZ (143 aa).

SpoVT-AbrB domains are found at residues threonine 6–glutamate 49 and serine 78–valine 121.

Belongs to the MraZ family. In terms of assembly, forms oligomers.

The protein localises to the cytoplasm. It is found in the nucleoid. The sequence is that of Transcriptional regulator MraZ from Spiroplasma kunkelii.